A 343-amino-acid chain; its full sequence is Transmembrane protein 120A (343 aa).

At 1–132 the chain is on the cytoplasmic side; it reads MQSPPPDPLG…KQAKFAYKDE (132 aa). Residue Lys130 coordinates CoA. The helical transmembrane segment at 133 to 152 threads the bilayer; the sequence is YEKFKLYLTIILIVISFTCR. Topologically, residues 153–158 are extracellular; sequence FLLNSR. Residues 159–177 traverse the membrane as a helical segment; sequence VTDAAFNFLLVWYYCTLTI. Residues 178 to 190 lie on the Cytoplasmic side of the membrane; the sequence is RESILINNGSRIK. Ser187 and Arg188 together coordinate CoA. A helical membrane pass occupies residues 191-209; sequence GWWVFHHYVSTFLSGVMLT. Over 210–218 the chain is Extracellular; that stretch reads WPDGLMYQK. A helical membrane pass occupies residues 219–240; the sequence is FRNQFLSFSMYQSFVQFLQYYY. Residues Gln237, Tyr240, Gln241, and His283 each coordinate CoA. Topologically, residues 241-270 are cytoplasmic; that stretch reads QSGCLYRLRALGERHTMDLTVEGFQSWMWR. Residues 271 to 294 traverse the membrane as a helical segment; that stretch reads GLTFLLPFLFFGHFWQLFNALTLF. The Extracellular segment spans residues 295–304; sequence NLARDPECKE. Residues 305–330 traverse the membrane as a helical segment; sequence WQVLMCGLPFLLLFLGNFFTTLRVVH. Residues 331–343 are Cytoplasmic-facing; that stretch reads QKFHSQQHGSKKD. CoA is bound at residue Lys332.

Belongs to the TMEM120 family. Homodimer. Forms heterooligomer with TMEM120B. Interacts with PKD2; TMEM120A inhibits PKD2 channel activity through the physical association of PKD2 with TMEM120A.

It localises to the cell membrane. The protein resides in the nucleus inner membrane. Its subcellular location is the endoplasmic reticulum. In terms of biological role, multifunctional protein involved in mechanosensation, and plays an essential role in lipid metabolism and adipocyte differentiation. May function as a potential ion channel involved in sensing mechanical stimuli. Mediates the mechanosensitivity of the PKD2-TMEM120A channel complex through direct physical interaction. TMEM120A seems to affect mechanosensation by inhibiting PIEZO2 channels, possibly by altering cellular lipid content. TMEM120A is structurally similar to a lipid-modifying enzyme, ELOVL7, and contains a bound coenzyme A molecule, which suggests it might function as an enzyme in lipid metabolism. Additionnaly, implicated in innate immune response against Zika virus. Acts as a key activator of the antiviral signaling involving STING1. The sequence is that of Transmembrane protein 120A from Rattus norvegicus (Rat).